Consider the following 318-residue polypeptide: Acetyl-coenzyme A carboxylase carboxyl transferase subunit alpha (318 aa).

Residues 38–292 (KLEKRLAKLE…NKTITKSLHA (255 aa)) form the CoA carboxyltransferase C-terminal domain.

Belongs to the AccA family. As to quaternary structure, acetyl-CoA carboxylase is a heterohexamer composed of biotin carboxyl carrier protein (AccB), biotin carboxylase (AccC) and two subunits each of ACCase subunit alpha (AccA) and ACCase subunit beta (AccD).

The protein resides in the cytoplasm. The catalysed reaction is N(6)-carboxybiotinyl-L-lysyl-[protein] + acetyl-CoA = N(6)-biotinyl-L-lysyl-[protein] + malonyl-CoA. Its pathway is lipid metabolism; malonyl-CoA biosynthesis; malonyl-CoA from acetyl-CoA: step 1/1. Its function is as follows. Component of the acetyl coenzyme A carboxylase (ACC) complex. First, biotin carboxylase catalyzes the carboxylation of biotin on its carrier protein (BCCP) and then the CO(2) group is transferred by the carboxyltransferase to acetyl-CoA to form malonyl-CoA. The polypeptide is Acetyl-coenzyme A carboxylase carboxyl transferase subunit alpha (Listeria monocytogenes serovar 1/2a (strain ATCC BAA-679 / EGD-e)).